Consider the following 314-residue polypeptide: Methionyl-tRNA formyltransferase (314 aa).

A (6S)-5,6,7,8-tetrahydrofolate-binding site is contributed by 112 to 115 (SLLP).

The protein belongs to the Fmt family.

The enzyme catalyses L-methionyl-tRNA(fMet) + (6R)-10-formyltetrahydrofolate = N-formyl-L-methionyl-tRNA(fMet) + (6S)-5,6,7,8-tetrahydrofolate + H(+). Attaches a formyl group to the free amino group of methionyl-tRNA(fMet). The formyl group appears to play a dual role in the initiator identity of N-formylmethionyl-tRNA by promoting its recognition by IF2 and preventing the misappropriation of this tRNA by the elongation apparatus. This is Methionyl-tRNA formyltransferase from Aeromonas hydrophila subsp. hydrophila (strain ATCC 7966 / DSM 30187 / BCRC 13018 / CCUG 14551 / JCM 1027 / KCTC 2358 / NCIMB 9240 / NCTC 8049).